Consider the following 367-residue polypeptide: Peptide chain release factor 2 (367 aa).

Residue Gln254 is modified to N5-methylglutamine.

This sequence belongs to the prokaryotic/mitochondrial release factor family. In terms of processing, methylated by PrmC. Methylation increases the termination efficiency of RF2.

It is found in the cytoplasm. Functionally, peptide chain release factor 2 directs the termination of translation in response to the peptide chain termination codons UGA and UAA. This is Peptide chain release factor 2 from Janthinobacterium sp. (strain Marseille) (Minibacterium massiliensis).